The following is a 413-amino-acid chain: Dolichyl-diphosphooligosaccharide--protein glycosyltransferase 48 kDa subunit (413 aa).

Residues 1–383 (GPRSLVLLEN…QYERFIPSAY (383 aa)) are Lumenal-facing. The helical transmembrane segment at 384-404 (PYYAGAFSMMVGLFMFSIVFL) threads the bilayer. At 405–413 (HMKEKEKSD) the chain is on the cytoplasmic side.

It belongs to the DDOST 48 kDa subunit family. In terms of assembly, component of the oligosaccharyltransferase (OST) complex.

Its subcellular location is the endoplasmic reticulum. It is found in the endoplasmic reticulum membrane. The protein operates within protein modification; protein glycosylation. Its function is as follows. Subunit of the oligosaccharyl transferase (OST) complex that catalyzes the initial transfer of a defined glycan (Glc(3)Man(9)GlcNAc(2) in eukaryotes) from the lipid carrier dolichol-pyrophosphate to an asparagine residue within an Asn-X-Ser/Thr consensus motif in nascent polypeptide chains, the first step in protein N-glycosylation. N-glycosylation occurs cotranslationally and the complex associates with the Sec61 complex at the channel-forming translocon complex that mediates protein translocation across the endoplasmic reticulum (ER). All subunits are required for a maximal enzyme activity. Required for the assembly of both SST3A- and SS3B-containing OST complexes. This chain is Dolichyl-diphosphooligosaccharide--protein glycosyltransferase 48 kDa subunit, found in Gallus gallus (Chicken).